Reading from the N-terminus, the 301-residue chain is Porphobilinogen deaminase (301 aa).

Cysteine 242 carries the post-translational modification S-(dipyrrolylmethanemethyl)cysteine.

The protein belongs to the HMBS family. In terms of assembly, monomer. Dipyrromethane serves as cofactor.

It carries out the reaction 4 porphobilinogen + H2O = hydroxymethylbilane + 4 NH4(+). It functions in the pathway porphyrin-containing compound metabolism; protoporphyrin-IX biosynthesis; coproporphyrinogen-III from 5-aminolevulinate: step 2/4. Functionally, tetrapolymerization of the monopyrrole PBG into the hydroxymethylbilane pre-uroporphyrinogen in several discrete steps. The sequence is that of Porphobilinogen deaminase from Rickettsia akari (strain Hartford).